The primary structure comprises 129 residues: Large-conductance mechanosensitive channel (129 aa).

Helical transmembrane passes span F10–G30 and G76–V96.

It belongs to the MscL family. In terms of assembly, homopentamer.

It localises to the cell inner membrane. Functionally, channel that opens in response to stretch forces in the membrane lipid bilayer. May participate in the regulation of osmotic pressure changes within the cell. In Actinobacillus pleuropneumoniae serotype 5b (strain L20), this protein is Large-conductance mechanosensitive channel.